The primary structure comprises 194 residues: Thiol:disulfide interchange protein CycY (194 aa).

The signal sequence occupies residues 1 to 37 (MSEQSTSANPQRRTFLMVLPLIAFIGLALLFWFRLGS). The Thioredoxin domain occupies 46-190 (ALIGRPAPQT…LRSVLLPQME (145 aa)). Cys-92 and Cys-95 form a disulfide bridge.

This sequence belongs to the thioredoxin family. DsbE subfamily.

Its subcellular location is the periplasm. Functionally, required for disulfide bond formation in some periplasmic proteins. Also acts as a disulfide oxidoreductase in cytochromes c biogenesis. The cysteines of apocytochromes c must be in the reduced state for covalent linkage between the two moieties to occur. The polypeptide is Thiol:disulfide interchange protein CycY (cycY) (Bradyrhizobium diazoefficiens (strain JCM 10833 / BCRC 13528 / IAM 13628 / NBRC 14792 / USDA 110)).